The chain runs to 1207 residues: Chromosomal serine/threonine-protein kinase JIL-1 (1207 aa).

Polar residues predominate over residues 1 to 19 (MSRLQKQNYEILSGTSTSR). Disordered regions lie at residues 1–119 (MSRL…ASAR), 164–183 (QDME…SSSL), and 210–230 (SSST…LDLD). Ser29 and Ser31 each carry phosphoserine. Positions 45–69 (LNGQLVANGNGKTRKNSNSETMTNG) are enriched in polar residues. The segment covering 88-97 (NYNNNNNNNN) has biased composition (low complexity). Residues 98-108 (SISATNGQYTN) are compositionally biased toward polar residues. Positions 109–118 (SSSKTTSASA) are enriched in low complexity. Positions 164–178 (QDMEEDEPNGIEIDE) are enriched in acidic residues. Residues 213–226 (TTPSYAMPTSNSTP) show a composition bias toward polar residues. One can recognise a Protein kinase 1 domain in the interval 261–530 (FKIIRVLGTG…ASEIKEHPFF (270 aa)). ATP contacts are provided by residues 267-275 (LGTGAYGRV) and Lys293. Residue Asp389 is the Proton acceptor of the active site. The residue at position 424 (Ser424) is a Phosphoserine. The 69-residue stretch at 531–599 (NGINWQELRT…VAPEHLEQMR (69 aa)) folds into the AGC-kinase C-terminal domain. The residue at position 588 (Thr588) is a Phosphothreonine. The Protein kinase 2 domain occupies 623–886 (LELGTRTSNG…LSDILDSEWL (264 aa)). ATP contacts are provided by residues 629 to 637 (TSNGAYGTC) and Lys652. The active-site Proton acceptor is the Asp739. Phosphothreonine is present on Thr1045. Ser1047 is modified (phosphoserine). Residues 1168–1197 (TFPRPKAQLKRTKREPKVPRPPTRVQPERA) are disordered.

It belongs to the protein kinase superfamily. Ser/Thr protein kinase family. Interacts with lola. Interacts with proteins of the male specific lethal (MSL) dosage compensation complex; this interaction is mediated by the kinase domains. Mg(2+) serves as cofactor. In terms of processing, autophosphorylated in vitro.

Its subcellular location is the nucleus. It is found in the chromosome. It carries out the reaction L-seryl-[protein] + ATP = O-phospho-L-seryl-[protein] + ADP + H(+). The catalysed reaction is L-threonyl-[protein] + ATP = O-phospho-L-threonyl-[protein] + ADP + H(+). In terms of biological role, phosphorylates 'Ser-10' of histone H3. May regulate gene expression by establishing or maintaining the structure of more open chromatin regions. Also required for normal polytene chromosome structure, for oogenesis and for viability throughout development. Regulates the structure of polytene chromosomes in salivary glands. May phosphorylate 'Ser-1' of histone H2A. The sequence is that of Chromosomal serine/threonine-protein kinase JIL-1 from Drosophila melanogaster (Fruit fly).